A 204-amino-acid polypeptide reads, in one-letter code: uncharacterized protein (204 aa).

Its subcellular location is the cytoplasm. The protein resides in the nucleus. This is an uncharacterized protein from Schizosaccharomyces pombe (strain 972 / ATCC 24843) (Fission yeast).